Here is a 631-residue protein sequence, read N- to C-terminus: Pescadillo homolog (631 aa).

A BRCT domain is found at 321–414; that stretch reads RLRTLFKGLK…QLLPTNDYFL (94 aa). Positions 428–442 are enriched in basic and acidic residues; the sequence is SKRDSYIPPEEKALH. Disordered regions lie at residues 428–471, 489–561, and 602–631; these read SKRD…EADQ, YKKY…VDEH, and ADNKEAKKAAKREARKQAAEAAARAAKLVK. Ser453 and Ser457 each carry phosphoserine. Acidic residues-rich tracts occupy residues 453–471 and 498–525; these read SEEESEEDEAEKEEEEADQ and VNEDEEDLSEEDDEEDDDEEDVDKEDVD. A compositionally biased stretch (basic and acidic residues) spans 526–538; it reads EQTKRKQQEKEKM. Positions 544–553 are enriched in basic residues; the sequence is KVHKVNKRQV. The stretch at 591–631 forms a coiled coil; it reads WLLRKKRRNIDADNKEAKKAAKREARKQAAEAAARAAKLVK. The span at 602–619 shows a compositional bias: basic and acidic residues; the sequence is ADNKEAKKAAKREARKQA. Residues 620–631 show a composition bias toward low complexity; it reads AEAAARAAKLVK.

Belongs to the pescadillo family.

The protein localises to the nucleus. The protein resides in the nucleolus. Its subcellular location is the nucleoplasm. In terms of biological role, required for maturation of ribosomal RNAs and formation of the large ribosomal subunit. The chain is Pescadillo homolog from Drosophila pseudoobscura pseudoobscura (Fruit fly).